The primary structure comprises 129 residues: Glycine cleavage system H protein (129 aa).

Residues Thr24–Lys106 form the Lipoyl-binding domain. Position 65 is an N6-lipoyllysine (Lys65).

It belongs to the GcvH family. As to quaternary structure, the glycine cleavage system is composed of four proteins: P, T, L and H. It depends on (R)-lipoate as a cofactor.

Its function is as follows. The glycine cleavage system catalyzes the degradation of glycine. The H protein shuttles the methylamine group of glycine from the P protein to the T protein. The sequence is that of Glycine cleavage system H protein from Escherichia fergusonii (strain ATCC 35469 / DSM 13698 / CCUG 18766 / IAM 14443 / JCM 21226 / LMG 7866 / NBRC 102419 / NCTC 12128 / CDC 0568-73).